The sequence spans 370 residues: Cytochrome b (370 aa).

4 helical membrane-spanning segments follow: residues 25-45 (FGSM…FLAV), 69-90 (WMMQ…YIHI), 105-125 (WLSG…GYVL), and 170-190 (FFAL…LHIL). Heme b-binding residues include His75 and His89. Residues His174 and His188 each contribute to the heme b site. His193 is an a ubiquinone binding site. Transmembrane regions (helical) follow at residues 218–238 (YKDM…VSFF), 280–300 (LGGA…PFTH), 312–332 (FMQL…WTAT), and 339–358 (FTTI…ISNP).

This sequence belongs to the cytochrome b family. In terms of assembly, the cytochrome bc1 complex contains 3 respiratory subunits (MT-CYB, CYC1 and UQCRFS1), 2 core proteins (UQCRC1 and UQCRC2) and probably 6 low-molecular weight proteins. Requires heme b as cofactor.

Its subcellular location is the mitochondrion inner membrane. Its function is as follows. Component of the ubiquinol-cytochrome c reductase complex (complex III or cytochrome b-c1 complex) that is part of the mitochondrial respiratory chain. The b-c1 complex mediates electron transfer from ubiquinol to cytochrome c. Contributes to the generation of a proton gradient across the mitochondrial membrane that is then used for ATP synthesis. This is Cytochrome b (MT-CYB) from Chilabothrus exsul (Abaco Island boa).